A 327-amino-acid polypeptide reads, in one-letter code: Phenylalanine--tRNA ligase alpha subunit (327 aa).

A Mg(2+)-binding site is contributed by E252.

The protein belongs to the class-II aminoacyl-tRNA synthetase family. Phe-tRNA synthetase alpha subunit type 1 subfamily. In terms of assembly, tetramer of two alpha and two beta subunits. Mg(2+) serves as cofactor.

The protein resides in the cytoplasm. The enzyme catalyses tRNA(Phe) + L-phenylalanine + ATP = L-phenylalanyl-tRNA(Phe) + AMP + diphosphate + H(+). This Shewanella baltica (strain OS185) protein is Phenylalanine--tRNA ligase alpha subunit.